A 269-amino-acid chain; its full sequence is 2-heptyl-3-hydroxy-4(1H)-quinolone dioxygenase (269 aa).

Position 97 (His-97) interacts with substrate. Catalysis depends on His-246, which acts as the Proton donor/acceptor.

Belongs to the AB hydrolase superfamily. In terms of assembly, monomer.

It catalyses the reaction 2-heptyl-3-hydroxy-4(1H)-quinolone + O2 = N-octanoylanthranilate + CO + H(+). In terms of biological role, ring-cleaving dioxygenase involved in the degradation pathway of the Pseudomonas aeruginosa quorum sensing signal molecules HHQ (2-heptyl-4-quinolone) and PQS (2-heptyl-3-hydroxy-4(1H)-quinolone) to anthranilate. Catalyzes the cleavage of PQS to form N-octanoylanthranilate and carbon monoxide. Thus, leads to the inactivation of PQS that plays a central role in the regulation of virulence factor production by P.aeruginosa, thereby quenching the production of antimicrobials, which may contribute to the competitiveness of M.abscessus in presence of P.aeruginosa. In vitro, can also use other 2-alkyl-3-hydroxy-4(1H)-quinolone (AHQ) substrates with shorter alkyl substituents at C2, but with lower efficiency. The sequence is that of 2-heptyl-3-hydroxy-4(1H)-quinolone dioxygenase from Mycobacteroides abscessus (strain ATCC 19977 / DSM 44196 / CCUG 20993 / CIP 104536 / JCM 13569 / NCTC 13031 / TMC 1543 / L948) (Mycobacterium abscessus).